Consider the following 525-residue polypeptide: GMP synthase [glutamine-hydrolyzing] (525 aa).

A Glutamine amidotransferase type-1 domain is found at 9 to 207 (RILILDFGSQ…VLEISGCEAL (199 aa)). Cys-86 (nucleophile) is an active-site residue. Residues His-181 and Glu-183 contribute to the active site. Residues 208-400 (WTPANIVEDA…LGLPYDMVYR (193 aa)) enclose the GMPS ATP-PPase domain. 235 to 241 (SGGVDSS) lines the ATP pocket.

In terms of assembly, homodimer.

It carries out the reaction XMP + L-glutamine + ATP + H2O = GMP + L-glutamate + AMP + diphosphate + 2 H(+). Its pathway is purine metabolism; GMP biosynthesis; GMP from XMP (L-Gln route): step 1/1. Catalyzes the synthesis of GMP from XMP. The chain is GMP synthase [glutamine-hydrolyzing] from Ectopseudomonas mendocina (strain ymp) (Pseudomonas mendocina).